Here is a 239-residue protein sequence, read N- to C-terminus: Orotidine 5'-phosphate decarboxylase (239 aa).

Substrate contacts are provided by residues D10, K32, 59–68, T122, R184, Q193, G213, and R214; that span reads DLKLHDIPNT. Residue K61 is the Proton donor of the active site.

This sequence belongs to the OMP decarboxylase family. Type 1 subfamily. As to quaternary structure, homodimer.

It carries out the reaction orotidine 5'-phosphate + H(+) = UMP + CO2. It functions in the pathway pyrimidine metabolism; UMP biosynthesis via de novo pathway; UMP from orotate: step 2/2. In terms of biological role, catalyzes the decarboxylation of orotidine 5'-monophosphate (OMP) to uridine 5'-monophosphate (UMP). The chain is Orotidine 5'-phosphate decarboxylase from Geobacillus thermodenitrificans (strain NG80-2).